The sequence spans 791 residues: ABC multidrug transporter mdr2 (791 aa).

The N-linked (GlcNAc...) asparagine glycan is linked to Asn-147. Transmembrane regions (helical) follow at residues 182–202 (ALAF…PFSI) and 220–240 (LFGL…TLGA). Residues 182-471 (ALAFLFLLVS…LSSFYSELMK (290 aa)) enclose the ABC transmembrane type-1 domain. Asn-303 carries N-linked (GlcNAc...) asparagine glycosylation. 2 consecutive transmembrane segments (helical) span residues 307–324 (GLRA…MAYV) and 326–346 (LKLS…AFFY). N-linked (GlcNAc...) asparagine glycosylation is found at Asn-352 and Asn-421. A run of 2 helical transmembrane segments spans residues 422–442 (MTIL…AITI) and 445–465 (LTSF…LSSF). Residues 504-741 (IRFENVTFSY…PDGAFTKLME (238 aa)) enclose the ABC transporter domain. A glycan (N-linked (GlcNAc...) asparagine) is linked at Asn-508. 539–546 (GPSGGGKS) serves as a coordination point for ATP. The N-linked (GlcNAc...) asparagine glycan is linked to Asn-692. Polar residues predominate over residues 754–769 (ANTPANPVAQETSWDL). The segment at 754–791 (ANTPANPVAQETSWDLQSDDGTEISEDTNIPSEPRTID) is disordered. The span at 770-779 (QSDDGTEISE) shows a compositional bias: acidic residues.

It belongs to the ABC transporter superfamily. ABCB family. Mitochondrial peptide exporter (TC 3.A.1.212) subfamily.

The protein resides in the cell membrane. In terms of biological role, pleiotropic ABC efflux transporter that may be involved in A.fumigatus adaptation to azoles. The sequence is that of ABC multidrug transporter mdr2 from Aspergillus fumigatus (strain ATCC MYA-4609 / CBS 101355 / FGSC A1100 / Af293) (Neosartorya fumigata).